A 340-amino-acid polypeptide reads, in one-letter code: MGKDYYQTLGLARGASDEEIKRAYRRQALRYHPDKNKEPGAEEKFKEIAEAYDVLSDPRKREIFDRYGEEGLKGSGPSGGSGGGANGTSFSYTFHGDPHAMFAEFFGGRNPFDTFFGQRNGEEGMDIDDPFSGFPMGMGGFTNVNFGRSRSAQEPARKKQDPPVTHDLRVSLEEIYSGCTKKMKISHKRLNPDGKSIRNEDKILTIEVKKGWKEGTKITFPKEGDQTSNNIPADIVFVLKDKPHNIFKRDGSDVIYPARISLREALCGCTVNVPTLDGRTIPVVFKDVIRPGMRRKVPGEGLPLPKTPEKRGDLIIEFEVIFPERIPQTSRTVLEQVLPI.

The 69-residue stretch at 2–70 (GKDYYQTLGL…REIFDRYGEE (69 aa)) folds into the J domain. Residue T307 is modified to Phosphothreonine.

Interacts with DNAJC3. Interacts with HSF1 (via transactivation domain); this interaction results in the inhibition of heat shock- and HSF1-induced transcriptional activity during the attenuation and recovery phase period of the heat shock response. Interacts with BAG3.

It localises to the cytoplasm. It is found in the nucleus. The protein localises to the nucleolus. In terms of biological role, interacts with HSP70 and can stimulate its ATPase activity. Stimulates the association between HSC70 and HIP. Negatively regulates heat shock-induced HSF1 transcriptional activity during the attenuation and recovery phase period of the heat shock response. Stimulates ATP hydrolysis and the folding of unfolded proteins mediated by HSPA1A/B (in vitro). This chain is DnaJ homolog subfamily B member 1 (DNAJB1), found in Homo sapiens (Human).